The following is a 704-amino-acid chain: Polyribonucleotide nucleotidyltransferase (704 aa).

Asp486 and Asp492 together coordinate Mg(2+). The region spanning 553–612 (PKIVIVKINPDKIRDVIGPGGKQINKIIEETGVKIDTEQDGTIYISSANEEMNARAKQII) is the KH domain. In terms of domain architecture, S1 motif spans 622-690 (GEYYLSTVKR…KQGRVNLSRK (69 aa)).

The protein belongs to the polyribonucleotide nucleotidyltransferase family. Mg(2+) is required as a cofactor.

It is found in the cytoplasm. The catalysed reaction is RNA(n+1) + phosphate = RNA(n) + a ribonucleoside 5'-diphosphate. In terms of biological role, involved in mRNA degradation. Catalyzes the phosphorolysis of single-stranded polyribonucleotides processively in the 3'- to 5'-direction. The polypeptide is Polyribonucleotide nucleotidyltransferase (Lysinibacillus sphaericus (strain C3-41)).